The sequence spans 298 residues: Elongation factor Ts (298 aa).

Residues 79-82 are involved in Mg(2+) ion dislocation from EF-Tu; sequence TDFV.

It belongs to the EF-Ts family.

The protein resides in the cytoplasm. Functionally, associates with the EF-Tu.GDP complex and induces the exchange of GDP to GTP. It remains bound to the aminoacyl-tRNA.EF-Tu.GTP complex up to the GTP hydrolysis stage on the ribosome. This is Elongation factor Ts (tsf) from Mycoplasma pneumoniae (strain ATCC 29342 / M129 / Subtype 1) (Mycoplasmoides pneumoniae).